The primary structure comprises 664 residues: Transketolase 1 (664 aa).

Histidine 26 contacts substrate. Residues histidine 66 and glycine 114–leucine 116 each bind thiamine diphosphate. Position 155 (aspartate 155) interacts with Mg(2+). 2 residues coordinate thiamine diphosphate: glycine 156 and asparagine 185. Positions 185 and 187 each coordinate Mg(2+). 3 residues coordinate substrate: histidine 260, arginine 357, and serine 384. A thiamine diphosphate-binding site is contributed by histidine 260. Glutamate 411 serves as the catalytic Proton donor. A thiamine diphosphate-binding site is contributed by phenylalanine 437. Substrate-binding residues include histidine 461, aspartate 469, and arginine 520.

Belongs to the transketolase family. Homodimer. It depends on Mg(2+) as a cofactor. Ca(2+) is required as a cofactor. Mn(2+) serves as cofactor. Requires Co(2+) as cofactor. The cofactor is thiamine diphosphate.

The enzyme catalyses D-sedoheptulose 7-phosphate + D-glyceraldehyde 3-phosphate = aldehydo-D-ribose 5-phosphate + D-xylulose 5-phosphate. Functionally, catalyzes the transfer of a two-carbon ketol group from a ketose donor to an aldose acceptor, via a covalent intermediate with the cofactor thiamine pyrophosphate. The sequence is that of Transketolase 1 (tkt1) from Vibrio vulnificus (strain CMCP6).